A 468-amino-acid chain; its full sequence is UDP-N-acetylmuramate--L-alanine ligase (468 aa).

Position 114–120 (114–120 (GTHGKTT)) interacts with ATP.

It belongs to the MurCDEF family.

Its subcellular location is the cytoplasm. It catalyses the reaction UDP-N-acetyl-alpha-D-muramate + L-alanine + ATP = UDP-N-acetyl-alpha-D-muramoyl-L-alanine + ADP + phosphate + H(+). The protein operates within cell wall biogenesis; peptidoglycan biosynthesis. In terms of biological role, cell wall formation. The chain is UDP-N-acetylmuramate--L-alanine ligase from Methylobacterium radiotolerans (strain ATCC 27329 / DSM 1819 / JCM 2831 / NBRC 15690 / NCIMB 10815 / 0-1).